The sequence spans 158 residues: C-type lectin lectoxin-Enh7 (158 aa).

Positions 1–23 (MGQFTVVSLGLLAVFLSLSGAKG) are cleaved as a signal peptide. Cystine bridges form between Cys-26–Cys-37, Cys-54–Cys-154, and Cys-129–Cys-146. The 123-residue stretch at 33–155 (RNGVCNKLFP…CASLHPFICQ (123 aa)) folds into the C-type lectin domain. A Mannose-binding motif is present at residues 119-121 (EPN). Glu-127, Asn-142, and Asp-143 together coordinate Ca(2+).

This sequence belongs to the true venom lectin family. As to expression, expressed by the venom gland.

The protein resides in the secreted. Functionally, mannose-binding lectin which recognizes specific carbohydrate structures and agglutinates a variety of animal cells by binding to cell-surface glycoproteins and glycolipids. May be a calcium-dependent lectin. This chain is C-type lectin lectoxin-Enh7, found in Pseudoferania polylepis (Macleay's water snake).